The sequence spans 160 residues: Putative NrdI-like protein (160 aa).

This sequence belongs to the NrdI family.

This Streptococcus pyogenes serotype M1 protein is Putative NrdI-like protein.